Reading from the N-terminus, the 837-residue chain is Katanin p80 WD40 repeat-containing subunit B1 homolog KTN80.4 (837 aa).

WD repeat units follow at residues 14–54 (AHSA…AILS), 57–96 (GHSS…IVRT), 99–138 (GHRS…CIHT), 141–182 (GHTR…TEFK), 184–222 (HEGQ…LIGS), 225–265 (PETA…DGVD), and 267–304 (GWSR…TEPC). Positions 115–131 (FFASGSLDTNLKIWDIR) match the DWD box motif. Disordered stretches follow at residues 307–328 (GDTA…DPVV), 358–462 (GRLS…ANPV), and 501–614 (LQAA…LVIN). Polar residues-rich tracts occupy residues 376–387 (IGRSSTSQNSES) and 412–450 (TFSS…TSRR). Over residues 509–520 (SPSSRNNPDLPD) the composition is skewed to low complexity. Basic and acidic residues-rich tracts occupy residues 553–563 (ATERSINDFRY) and 580–595 (RNHD…RSNR).

It belongs to the WD repeat KATNB1 family. As to quaternary structure, component of KTN80-KTN1 complexes composed of a hexamer of KTN1-KTN80 heterodimers that sense microtubule (MT) geometry to confer precise MT severing. Interacts directly with AAA1/KTN1, and weakly with KTN80.1 and KTN80.3. In terms of tissue distribution, expressed in siliques, flowers, leaves, stems and roots.

It localises to the cytoplasm. Its subcellular location is the cytoskeleton. May participate in a complex which severs microtubules in an ATP-dependent manner. This activity may promote rapid reorganization of cellular microtubule arrays. Confers precision to microtubule (MT) severing by specific targeting of KTN1 to MT cleavage sites such as crossover or branching nucleation sites. Together with other KTN80s, regulates cell elongation by modulating MT organization. This chain is Katanin p80 WD40 repeat-containing subunit B1 homolog KTN80.4, found in Arabidopsis thaliana (Mouse-ear cress).